A 238-amino-acid polypeptide reads, in one-letter code: 15,16-dihydrobiliverdin:ferredoxin oxidoreductase (238 aa).

It belongs to the HY2 family.

The enzyme catalyses 15,16-dihydrobiliverdin + oxidized 2[4Fe-4S]-[ferredoxin] = biliverdin IXalpha + reduced 2[4Fe-4S]-[ferredoxin] + 2 H(+). Its function is as follows. Catalyzes the two-electron reduction of biliverdin IX-alpha at the C15 methine bridge. This is 15,16-dihydrobiliverdin:ferredoxin oxidoreductase from Prochlorococcus marinus (strain MIT 9211).